The chain runs to 175 residues: Translation initiation factor IF-3 (175 aa).

It belongs to the IF-3 family. Monomer.

The protein localises to the cytoplasm. Its function is as follows. IF-3 binds to the 30S ribosomal subunit and shifts the equilibrium between 70S ribosomes and their 50S and 30S subunits in favor of the free subunits, thus enhancing the availability of 30S subunits on which protein synthesis initiation begins. This Staphylococcus aureus (strain USA300) protein is Translation initiation factor IF-3.